A 170-amino-acid polypeptide reads, in one-letter code: Allophycocyanin subunit beta-18 (170 aa).

The residue at position 74 (Asn-74) is an N4-methylasparagine. Cys-84 lines the (2R,3E)-phycocyanobilin pocket.

It belongs to the phycobiliprotein family. In terms of assembly, heterodimer of an alpha and a beta chain. Contains one covalently linked bilin chromophore.

It localises to the plastid. It is found in the chloroplast thylakoid membrane. In terms of biological role, light-harvesting photosynthetic bile pigment-protein from the phycobiliprotein complex. Allophycocyanin has a maximum absorption at approximately 650 nanometers. The sequence is that of Allophycocyanin subunit beta-18 (apcF) from Cyanidium caldarium (Red alga).